A 343-amino-acid chain; its full sequence is Flap endonuclease 1 (343 aa).

Residues 1–98 (MGVPIGELIP…KELEKRREAR (98 aa)) form an N-domain region. 7 residues coordinate Mg(2+): Asp27, Asp80, Glu152, Glu154, Asp173, Asp175, and Asp236. The tract at residues 116–258 (EARKYAQRAT…KALEIVKYSK (143 aa)) is I-domain. Positions 330-338 (KQSTLESWF) are interaction with PCNA.

The protein belongs to the XPG/RAD2 endonuclease family. FEN1 subfamily. In terms of assembly, interacts with PCNA. PCNA stimulates the nuclease activity without altering cleavage specificity. It depends on Mg(2+) as a cofactor.

Functionally, structure-specific nuclease with 5'-flap endonuclease and 5'-3' exonuclease activities involved in DNA replication and repair. During DNA replication, cleaves the 5'-overhanging flap structure that is generated by displacement synthesis when DNA polymerase encounters the 5'-end of a downstream Okazaki fragment. Binds the unpaired 3'-DNA end and kinks the DNA to facilitate 5' cleavage specificity. Cleaves one nucleotide into the double-stranded DNA from the junction in flap DNA, leaving a nick for ligation. Also involved in the base excision repair (BER) pathway. Acts as a genome stabilization factor that prevents flaps from equilibrating into structures that lead to duplications and deletions. Also possesses 5'-3' exonuclease activity on nicked or gapped double-stranded DNA. The protein is Flap endonuclease 1 of Pyrococcus abyssi (strain GE5 / Orsay).